We begin with the raw amino-acid sequence, 34 residues long: MGGEILNAAILSFGLIFVGWGLGALLLKIQGGEE.

Residues 9 to 27 traverse the membrane as a helical segment; it reads AILSFGLIFVGWGLGALLL.

Belongs to the PetM family. In terms of assembly, the 4 large subunits of the cytochrome b6-f complex are cytochrome b6, subunit IV (17 kDa polypeptide, PetD), cytochrome f and the Rieske protein, while the 4 small subunits are PetG, PetL, PetM and PetN. The complex functions as a dimer.

Its subcellular location is the cellular thylakoid membrane. Its function is as follows. Component of the cytochrome b6-f complex, which mediates electron transfer between photosystem II (PSII) and photosystem I (PSI), cyclic electron flow around PSI, and state transitions. This Nostoc punctiforme (strain ATCC 29133 / PCC 73102) protein is Cytochrome b6-f complex subunit 7.